The sequence spans 882 residues: Isoamylase 2, chloroplastic (882 aa).

The N-terminal 70 residues, 1-70 (MAAWSPSVGI…LQSYQFSKIC (70 aa)), are a transit peptide targeting the chloroplast.

The protein belongs to the glycosyl hydrolase 13 family. As to quaternary structure, associates with ISA1 to form the heteromultimeric complex Iso1 required for amylopectin synthesis.

The protein localises to the plastid. Its subcellular location is the chloroplast. It functions in the pathway glycan biosynthesis; starch biosynthesis. Functionally, involved in the trimming of pre-amylopectin chains. Accelerates the crystallization of nascent amylopectin molecules during starch synthesis. ISA1 and ISA2 work exclusively together as a multimeric holoenzyme. ISA1-ISA2 removes preferentially branches that are very close to other branches. The chain is Isoamylase 2, chloroplastic (ISA2) from Arabidopsis thaliana (Mouse-ear cress).